The sequence spans 174 residues: Protein GrpE (174 aa).

A disordered region spans residues 1 to 35; that stretch reads MAQDIKNEEVEEVQEEEVVETAEETTPEKSELDLA. Acidic residues predominate over residues 9–25; the sequence is EVEEVQEEEVVETAEET. Residues 26 to 35 are compositionally biased toward basic and acidic residues; it reads TPEKSELDLA.

Belongs to the GrpE family. Homodimer.

The protein localises to the cytoplasm. In terms of biological role, participates actively in the response to hyperosmotic and heat shock by preventing the aggregation of stress-denatured proteins, in association with DnaK and GrpE. It is the nucleotide exchange factor for DnaK and may function as a thermosensor. Unfolded proteins bind initially to DnaJ; upon interaction with the DnaJ-bound protein, DnaK hydrolyzes its bound ATP, resulting in the formation of a stable complex. GrpE releases ADP from DnaK; ATP binding to DnaK triggers the release of the substrate protein, thus completing the reaction cycle. Several rounds of ATP-dependent interactions between DnaJ, DnaK and GrpE are required for fully efficient folding. This chain is Protein GrpE, found in Streptococcus pneumoniae (strain ATCC 700669 / Spain 23F-1).